Here is a 125-residue protein sequence, read N- to C-terminus: Prefoldin subunit beta (125 aa).

The protein belongs to the prefoldin subunit beta family. As to quaternary structure, heterohexamer of two alpha and four beta subunits.

It is found in the cytoplasm. In terms of biological role, molecular chaperone capable of stabilizing a range of proteins. Seems to fulfill an ATP-independent, HSP70-like function in archaeal de novo protein folding. The sequence is that of Prefoldin subunit beta (pfdB) from Sulfurisphaera tokodaii (strain DSM 16993 / JCM 10545 / NBRC 100140 / 7) (Sulfolobus tokodaii).